Reading from the N-terminus, the 194-residue chain is Putative 3-methyladenine DNA glycosylase (194 aa).

Belongs to the DNA glycosylase MPG family.

This is Putative 3-methyladenine DNA glycosylase from Aeropyrum pernix (strain ATCC 700893 / DSM 11879 / JCM 9820 / NBRC 100138 / K1).